The chain runs to 497 residues: UDP-N-acetylmuramoyl-L-alanyl-D-glutamate--2,6-diaminopimelate ligase (497 aa).

Residue S33 participates in UDP-N-acetyl-alpha-D-muramoyl-L-alanyl-D-glutamate binding. 119 to 125 contributes to the ATP binding site; the sequence is GTNGKTT. UDP-N-acetyl-alpha-D-muramoyl-L-alanyl-D-glutamate contacts are provided by residues 161 to 162, S188, Q194, and R196; that span reads TT. Residue K228 is modified to N6-carboxylysine. Meso-2,6-diaminopimelate contacts are provided by residues R390, 414 to 417, G465, and E469; that span reads DNPR. The Meso-diaminopimelate recognition motif signature appears at 414–417; sequence DNPR.

This sequence belongs to the MurCDEF family. MurE subfamily. The cofactor is Mg(2+). Carboxylation is probably crucial for Mg(2+) binding and, consequently, for the gamma-phosphate positioning of ATP.

The protein resides in the cytoplasm. The catalysed reaction is UDP-N-acetyl-alpha-D-muramoyl-L-alanyl-D-glutamate + meso-2,6-diaminopimelate + ATP = UDP-N-acetyl-alpha-D-muramoyl-L-alanyl-gamma-D-glutamyl-meso-2,6-diaminopimelate + ADP + phosphate + H(+). Its pathway is cell wall biogenesis; peptidoglycan biosynthesis. Catalyzes the addition of meso-diaminopimelic acid to the nucleotide precursor UDP-N-acetylmuramoyl-L-alanyl-D-glutamate (UMAG) in the biosynthesis of bacterial cell-wall peptidoglycan. In Synechococcus elongatus (strain ATCC 33912 / PCC 7942 / FACHB-805) (Anacystis nidulans R2), this protein is UDP-N-acetylmuramoyl-L-alanyl-D-glutamate--2,6-diaminopimelate ligase.